The primary structure comprises 238 residues: Ribonuclease PH (238 aa).

Residues arginine 86 and 124–126 (GTR) each bind phosphate.

This sequence belongs to the RNase PH family. Homohexameric ring arranged as a trimer of dimers.

It catalyses the reaction tRNA(n+1) + phosphate = tRNA(n) + a ribonucleoside 5'-diphosphate. Its function is as follows. Phosphorolytic 3'-5' exoribonuclease that plays an important role in tRNA 3'-end maturation. Removes nucleotide residues following the 3'-CCA terminus of tRNAs; can also add nucleotides to the ends of RNA molecules by using nucleoside diphosphates as substrates, but this may not be physiologically important. Probably plays a role in initiation of 16S rRNA degradation (leading to ribosome degradation) during starvation. The protein is Ribonuclease PH of Sphingopyxis alaskensis (strain DSM 13593 / LMG 18877 / RB2256) (Sphingomonas alaskensis).